The following is a 308-amino-acid chain: GTP-binding protein RAD (308 aa).

Residues 1-16 (MTLNGGGSGAGGSRGG) are compositionally biased toward gly residues. The disordered stretch occupies residues 1-88 (MTLNGGGSGA…SLSSGGSDSD (88 aa)). Residue arginine 24 is modified to Omega-N-methylarginine. Serine 26 bears the Phosphoserine mark. Low complexity predominate over residues 48–68 (QAALTPGALTAAAAGTGTQGP). GTP-binding positions include 98 to 105 (GAPGVGKS) and 203 to 206 (NKSD). The calmodulin-binding stretch occupies residues 278–297 (AKRFLGRIVARNSRKMAFRA).

It belongs to the small GTPase superfamily. RGK family. In terms of assembly, interacts with calmodulin preferentially in the inactive, GDP-bound form. Binds CAMKII which is capable of phosphorylating RAD in vitro. Interacts with CAMK2D. Interacts with CACNB2; interaction may be involved in beta-adrenergic regulation of heart rate and contractile force. Interaction with CACNB2 regulates the trafficking of CACNA1C to the cell membrane. As to expression, most abundantly expressed in the heart. Also found in the skeletal muscle and lung. Lesser amounts in placenta and kidney. Also detected in adipose tissue. Overexpressed in muscle of type II diabetic humans.

The protein localises to the cell membrane. Functionally, may regulate basal voltage-dependent L-type Ca(2+) currents and be required for beta-adrenergic augmentation of Ca(2+) influx in cardiomyocytes, thereby regulating increases in heart rate and contractile force. May play an important role in cardiac antiarrhythmia via the strong suppression of voltage-gated L-type Ca(2+) currents. Regulates voltage-dependent L-type calcium channel subunit alpha-1C trafficking to the cell membrane. Inhibits cardiac hypertrophy through the calmodulin-dependent kinase II (CaMKII) pathway. Inhibits phosphorylation and activation of CAMK2D. This is GTP-binding protein RAD (RRAD) from Homo sapiens (Human).